Consider the following 345-residue polypeptide: NADPH dehydrogenase (345 aa).

23-26 (SPMC) lines the FMN pocket. Y28 is a substrate binding site. The FMN site is built by A60 and Q102. 164 to 167 (HGAH) serves as a coordination point for substrate. Residues R215 and 307 to 308 (GR) each bind FMN.

Belongs to the NADH:flavin oxidoreductase/NADH oxidase family. NamA subfamily. In terms of assembly, homotetramer. It depends on FMN as a cofactor.

It catalyses the reaction A + NADPH + H(+) = AH2 + NADP(+). Catalyzes the reduction of the double bond of an array of alpha,beta-unsaturated aldehydes and ketones. It also reduces the nitro group of nitroester and nitroaromatic compounds. It could have a role in detoxification processes. In Bacillus cereus (strain ATCC 10987 / NRS 248), this protein is NADPH dehydrogenase.